A 90-amino-acid polypeptide reads, in one-letter code: DNA-directed RNA polymerase subunit omega (90 aa).

The protein belongs to the RNA polymerase subunit omega family. The RNAP catalytic core consists of 2 alpha, 1 beta, 1 beta' and 1 omega subunit. When a sigma factor is associated with the core the holoenzyme is formed, which can initiate transcription.

It catalyses the reaction RNA(n) + a ribonucleoside 5'-triphosphate = RNA(n+1) + diphosphate. Functionally, promotes RNA polymerase assembly. Latches the N- and C-terminal regions of the beta' subunit thereby facilitating its interaction with the beta and alpha subunits. This Alteromonas mediterranea (strain DSM 17117 / CIP 110805 / LMG 28347 / Deep ecotype) protein is DNA-directed RNA polymerase subunit omega.